The following is a 373-amino-acid chain: Muscleblind-like protein 2 (373 aa).

C3H1-type zinc fingers lie at residues 13 to 41, 47 to 73, 176 to 204, and 212 to 238; these read WLTL…HPPK, NGRV…HPPT, TDKL…HPAD, and DNTV…HPPA.

Belongs to the muscleblind family. As to quaternary structure, interacts with ITGA3.

It localises to the nucleus. The protein resides in the cytoplasm. Mediates pre-mRNA alternative splicing regulation. Acts either as activator or repressor of splicing on specific pre-mRNA targets. Inhibits cardiac troponin-T (TNNT2) pre-mRNA exon inclusion but induces insulin receptor (IR) pre-mRNA exon inclusion in muscle. Antagonizes the alternative splicing activity pattern of CELF proteins. RNA-binding protein that binds to 5'ACACCC-3' core sequence, termed zipcode, within the 3'UTR of ITGA3. Binds to CUG triplet repeat expansion in myotonic dystrophy muscle cells by sequestering the target RNAs. Together with RNA binding proteins RBPMS and RBFOX2, activates vascular smooth muscle cells alternative splicing events. Regulates NCOR2 alternative splicing. Seems to regulate expression and localization of ITGA3 by transporting it from the nucleus to cytoplasm at adhesion plaques. May play a role in myotonic dystrophy pathophysiology (DM). This chain is Muscleblind-like protein 2 (Mbnl2), found in Mus musculus (Mouse).